The following is a 711-amino-acid chain: Polyribonucleotide nucleotidyltransferase (711 aa).

Residues Asp486 and Asp492 each coordinate Mg(2+). In terms of domain architecture, KH spans 553 to 612 (PRIHTIKINPDKIKDVIGKGGSVIRALTEETGTTIEIEDDGTVKIAATDGDKAQHAIRRI). The S1 motif domain occupies 622 to 690 (GRIYNGKVTR…RQGRVRLSIK (69 aa)). Positions 689–711 (IKEATEQTPSAAAPEAPAAEQGE) are disordered. Low complexity predominate over residues 694–711 (EQTPSAAAPEAPAAEQGE).

The protein belongs to the polyribonucleotide nucleotidyltransferase family. As to quaternary structure, component of the RNA degradosome, which is a multiprotein complex involved in RNA processing and mRNA degradation. Mg(2+) is required as a cofactor.

It is found in the cytoplasm. It carries out the reaction RNA(n+1) + phosphate = RNA(n) + a ribonucleoside 5'-diphosphate. Functionally, involved in mRNA degradation. Catalyzes the phosphorolysis of single-stranded polyribonucleotides processively in the 3'- to 5'-direction. This chain is Polyribonucleotide nucleotidyltransferase, found in Klebsiella pneumoniae subsp. pneumoniae (strain ATCC 700721 / MGH 78578).